Reading from the N-terminus, the 178-residue chain is MRRVVKAAALAAGATGLFSRVQTSVAIGRSFSTPQSQFQESSPVWKLGRLNHVAVAVPDLEKASSFYRDVLGAQVSEVVPLPEHGVSVVFVNLGNTKMELLHPLGSDSPITGFLQKNKAGGMHHVCIEVDNISAAVMDLKKKKIRSLSDEAKIGAHGKPVIFLHPKDCGGVLVELEQA.

Residues 1–38 (MRRVVKAAALAAGATGLFSRVQTSVAIGRSFSTPQSQF) constitute a mitochondrion transit peptide. Residues 49-178 (RLNHVAVAVP…GGVLVELEQA (130 aa)) form the VOC domain. His-52 contributes to the Co(2+) binding site. N6-succinyllysine is present on Lys-116. Co(2+) is bound at residue His-124. Residue Lys-152 is modified to N6-acetyllysine; alternate. Lys-152 carries the post-translational modification N6-succinyllysine; alternate. Co(2+) is bound at residue Glu-174.

The protein belongs to the methylmalonyl-CoA epimerase family.

It is found in the mitochondrion. The enzyme catalyses (R)-methylmalonyl-CoA = (S)-methylmalonyl-CoA. Methylmalonyl-CoA epimerase involved in propionyl-CoA metabolism. In Mus musculus (Mouse), this protein is Methylmalonyl-CoA epimerase, mitochondrial.